The sequence spans 295 residues: (R)-phenoxypropionate/alpha-ketoglutarate-dioxygenase (295 aa).

Histidine 111 and aspartate 113 together coordinate Fe cation. Positions 138 and 255 each coordinate 2-oxoglutarate. Residue histidine 270 coordinates Fe cation. Arginine 281 contributes to the 2-oxoglutarate binding site.

This sequence belongs to the TfdA dioxygenase family. In terms of assembly, homotrimer. Fe cation is required as a cofactor. It depends on L-ascorbate as a cofactor.

The enzyme catalyses (R)-2-(4-chloro-2-methylphenoxy)propanoate + 2-oxoglutarate + O2 = 2-methyl-4-chlorophenol + pyruvate + succinate + CO2. It carries out the reaction (R)-(2,4-dichlorophenoxy)propanoate + 2-oxoglutarate + O2 = 2,4-dichlorophenol + pyruvate + succinate + CO2. It participates in xenobiotic degradation; 2-(2,4-dichlorophenoxy)propanoate degradation. Inhibited by divalent cations, most significantly by copper and nickel, and by diethylpyrocarbonate (DEPC). Its function is as follows. Involved in the degradation of the phenoxypropionate herbicides. Catalyzes the enantiospecific cleavage of the ether bond in the herbicid R-dichlorprop ((R)-2-(2,4-dichlorophenoxy)propionate)(R-2,4-DP) and R-mecoprop ((R)-2-(4-chloro-2-methylphenoxy)propionate)(R-2,4-MCPP). It can also accept (RS)-2-(2,4,5-trichlorophenoxy)propionate, (RS)-2-(4-chlorophenoxy)propionate, (RS)-2-(m-chlorophenoxy)propionate, however it can only accept 2-oxoglutarate as oxygen acceptor. This is (R)-phenoxypropionate/alpha-ketoglutarate-dioxygenase from Delftia acidovorans (Pseudomonas acidovorans).